We begin with the raw amino-acid sequence, 112 residues long: uncharacterized protein (112 aa).

The interval 70–112 (GLYRGRRPPGRDAARPTTAILFAQGRPPLLDQRAPTRRGSHQR) is disordered.

This is an uncharacterized protein from Homo sapiens (Human).